A 440-amino-acid polypeptide reads, in one-letter code: Transposon Ty1-LR4 Gag polyprotein (440 aa).

3 stretches are compositionally biased toward polar residues: residues 1 to 10 (MESQQLSQHP), 48 to 60 (TKAN…TPAS), and 127 to 152 (QSQF…GNTF). 3 disordered regions span residues 1–93 (MESQ…MMTQ), 126–173 (PQSQ…RPPP), and 352–440 (GSRN…PGTY). Residues 153–165 (TDSSSADSDMTST) are compositionally biased toward low complexity. The interval 299-401 (NNGIHINNKV…NSKSKTARAH (103 aa)) is RNA-binding. Residues 402–418 (NVSTSNNSPSTDNDSIS) are compositionally biased toward low complexity. Serine 416 is subject to Phosphoserine. The segment covering 419 to 428 (KSTTEPIQLN) has biased composition (polar residues). Residues 429–440 (NKHDLHLRPGTY) are compositionally biased toward basic and acidic residues.

As to quaternary structure, homotrimer.

The protein resides in the cytoplasm. In terms of biological role, capsid protein (CA) is the structural component of the virus-like particle (VLP), forming the shell that encapsulates the retrotransposons dimeric RNA genome. The particles are assembled from trimer-clustered units and there are holes in the capsid shells that allow for the diffusion of macromolecules. CA also has nucleocapsid-like chaperone activity, promoting primer tRNA(i)-Met annealing to the multipartite primer-binding site (PBS), dimerization of Ty1 RNA and initiation of reverse transcription. The protein is Transposon Ty1-LR4 Gag polyprotein (TY1A-LR4) of Saccharomyces cerevisiae (strain ATCC 204508 / S288c) (Baker's yeast).